The chain runs to 294 residues: Agamous-like MADS-box protein AGL82 (294 aa).

Residues 1 to 51 enclose the MADS-box domain; that stretch reads MVPKVVDLQRIANDKTRITTYKKRKASLYKKAQEFSTLCGVETCLIVYGPT.

Interacts with MEE14/CBP1.

The protein localises to the nucleus. In terms of biological role, probable transcription factor that may function in the maintenance of the proper function of the central cell in pollen tube attraction. This is Agamous-like MADS-box protein AGL82 from Arabidopsis thaliana (Mouse-ear cress).